We begin with the raw amino-acid sequence, 124 residues long: Large ribosomal subunit protein bL12 (124 aa).

It belongs to the bacterial ribosomal protein bL12 family. In terms of assembly, homodimer. Part of the ribosomal stalk of the 50S ribosomal subunit. Forms a multimeric L10(L12)X complex, where L10 forms an elongated spine to which 2 to 4 L12 dimers bind in a sequential fashion. Binds GTP-bound translation factors.

Forms part of the ribosomal stalk which helps the ribosome interact with GTP-bound translation factors. Is thus essential for accurate translation. This is Large ribosomal subunit protein bL12 from Liberibacter africanus subsp. capensis.